A 590-amino-acid chain; its full sequence is Multidrug resistance ABC transporter ATP-binding and permease protein (590 aa).

The next 6 helical transmembrane spans lie at 35 to 55 (YLFF…QLQV), 79 to 99 (IALY…LGIF), 150 to 170 (IPQA…MLQM), 176 to 196 (LAMI…MTFG), 261 to 281 (VMML…IYLI), and 292 to 312 (LGMM…ATFF). The region spanning 38 to 317 (FIIGILAGIV…VATFFTELAK (280 aa)) is the ABC transmembrane type-1 domain. Positions 349–584 (LSARHVDFAY…HPLYAKYVSE (236 aa)) constitute an ABC transporter domain. 382–389 (GPSGGGKS) is an ATP binding site.

The protein belongs to the ABC transporter superfamily. Multidrug exporter LmrA (TC 3.A.1.117.1) family. As to quaternary structure, homodimer.

It localises to the cell membrane. The catalysed reaction is ATP + H2O + xenobioticSide 1 = ADP + phosphate + xenobioticSide 2.. Functionally, efflux transporter for a variety of amphiphilic cationic compounds, including antibiotics. The protein is Multidrug resistance ABC transporter ATP-binding and permease protein (lmrA) of Lactococcus lactis subsp. lactis (strain IL1403) (Streptococcus lactis).